The primary structure comprises 97 residues: Cysteine-rich and transmembrane domain-containing protein 1 (97 aa).

Residues methionine 1 to glycine 40 show a composition bias toward pro residues. The disordered stretch occupies residues methionine 1–threonine 61. Over residues tyrosine 41–glycine 50 the composition is skewed to low complexity. Residues leucine 74–cysteine 91 traverse the membrane as a helical segment.

Belongs to the CYSTM1 family.

It localises to the membrane. This is Cysteine-rich and transmembrane domain-containing protein 1 (CYSTM1) from Homo sapiens (Human).